Here is a 439-residue protein sequence, read N- to C-terminus: Glutamyl-tRNA reductase (439 aa).

Substrate contacts are provided by residues 46–49 (TCNR), serine 111, 116–118 (EGE), and glutamine 122. Cysteine 47 serves as the catalytic Nucleophile. 191–196 (GTGAYA) serves as a coordination point for NADP(+).

This sequence belongs to the glutamyl-tRNA reductase family. In terms of assembly, homodimer.

It carries out the reaction (S)-4-amino-5-oxopentanoate + tRNA(Glu) + NADP(+) = L-glutamyl-tRNA(Glu) + NADPH + H(+). Its pathway is porphyrin-containing compound metabolism; protoporphyrin-IX biosynthesis; 5-aminolevulinate from L-glutamyl-tRNA(Glu): step 1/2. Functionally, catalyzes the NADPH-dependent reduction of glutamyl-tRNA(Glu) to glutamate 1-semialdehyde (GSA). The chain is Glutamyl-tRNA reductase from Clavibacter michiganensis subsp. michiganensis (strain NCPPB 382).